We begin with the raw amino-acid sequence, 122 residues long: Large ribosomal subunit protein uL14 (122 aa).

The protein belongs to the universal ribosomal protein uL14 family. As to quaternary structure, part of the 50S ribosomal subunit. Forms a cluster with proteins L3 and L19. In the 70S ribosome, L14 and L19 interact and together make contacts with the 16S rRNA in bridges B5 and B8.

Functionally, binds to 23S rRNA. Forms part of two intersubunit bridges in the 70S ribosome. The sequence is that of Large ribosomal subunit protein uL14 from Mesomycoplasma hyopneumoniae (strain 232) (Mycoplasma hyopneumoniae).